The primary structure comprises 502 residues: Cysteine--tRNA ligase (502 aa).

Cysteine 30 is a binding site for Zn(2+). Residues 32 to 42 (PTIYDYAHIGN) carry the 'HIGH' region motif. The Zn(2+) site is built by cysteine 224, histidine 263, and glutamate 267. The short motif at 296–300 (KMSKS) is the 'KMSKS' region element. An ATP-binding site is contributed by lysine 299.

This sequence belongs to the class-I aminoacyl-tRNA synthetase family. As to quaternary structure, monomer. It depends on Zn(2+) as a cofactor.

It localises to the cytoplasm. The catalysed reaction is tRNA(Cys) + L-cysteine + ATP = L-cysteinyl-tRNA(Cys) + AMP + diphosphate. The polypeptide is Cysteine--tRNA ligase (Bartonella quintana (strain Toulouse) (Rochalimaea quintana)).